We begin with the raw amino-acid sequence, 233 residues long: UPF0758 protein SRU_2338 (233 aa).

The region spanning Gln110 to Ile232 is the MPN domain. Zn(2+) contacts are provided by His181, His183, and Asp194. The JAMM motif motif lies at His181–Asp194.

It belongs to the UPF0758 family.

This is UPF0758 protein SRU_2338 from Salinibacter ruber (strain DSM 13855 / M31).